The chain runs to 255 residues: Ribonuclease PH (255 aa).

Residues Arg-86 and 124-126 (GTR) each bind phosphate.

This sequence belongs to the RNase PH family. Homohexameric ring arranged as a trimer of dimers.

The catalysed reaction is tRNA(n+1) + phosphate = tRNA(n) + a ribonucleoside 5'-diphosphate. Functionally, phosphorolytic 3'-5' exoribonuclease that plays an important role in tRNA 3'-end maturation. Removes nucleotide residues following the 3'-CCA terminus of tRNAs; can also add nucleotides to the ends of RNA molecules by using nucleoside diphosphates as substrates, but this may not be physiologically important. Probably plays a role in initiation of 16S rRNA degradation (leading to ribosome degradation) during starvation. This is Ribonuclease PH from Geobacillus thermodenitrificans (strain NG80-2).